The following is a 215-amino-acid chain: Redox-sensing transcriptional repressor Rex (215 aa).

The H-T-H motif DNA-binding region spans 18-57 (LYYRFLKNLHASGKQRVSSAELSDAVKVDSATIRRDFSYF). 92 to 97 (GVGNLG) is a binding site for NAD(+).

The protein belongs to the transcriptional regulatory Rex family. As to quaternary structure, homodimer.

The protein localises to the cytoplasm. In terms of biological role, modulates transcription in response to changes in cellular NADH/NAD(+) redox state. The polypeptide is Redox-sensing transcriptional repressor Rex (Bacillus velezensis (strain DSM 23117 / BGSC 10A6 / LMG 26770 / FZB42) (Bacillus amyloliquefaciens subsp. plantarum)).